Consider the following 714-residue polypeptide: FERM domain-containing protein 7 (714 aa).

Residues 2–282 enclose the FERM domain; it reads LHLKVQFLDD…EYHAFFRLSE (281 aa). Positions 537–558 form a coiled coil; that stretch reads NIRMKSFQQDLQVLQEAIARTS.

As to expression, expressed in liver, kidney, pancreas and at low levels in brain and heart. Expressed in embryonic brain and developing neural retina.

The protein resides in the cell projection. It is found in the neuron projection. It localises to the growth cone. Functionally, plays a role in neurite development, may be through the activation of the GTPase RAC1. Plays a role in the control of eye movement and gaze stability. This Homo sapiens (Human) protein is FERM domain-containing protein 7 (FRMD7).